The chain runs to 279 residues: Lactose operon transcription activator (279 aa).

The region spanning 174-272 is the HTH araC/xylS-type domain; that stretch reads QHAVDFINTN…EISASEYRHH (99 aa). DNA-binding regions (H-T-H motif) lie at residues 191 to 212 and 239 to 262; these read EDVA…KKNL and ISDI…TKHF.

Functionally, transcriptional regulator of the lacPH genes for lactose utilization. In Staphylococcus xylosus, this protein is Lactose operon transcription activator (lacR).